Here is a 728-residue protein sequence, read N- to C-terminus: Catalase-peroxidase 1 (728 aa).

Positions Trp91–Tyr218 form a cross-link, tryptophyl-tyrosyl-methioninium (Trp-Tyr) (with M-244). His92 functions as the Proton acceptor in the catalytic mechanism. A cross-link (tryptophyl-tyrosyl-methioninium (Tyr-Met) (with W-91)) is located at residues Tyr218 to Met244. His259 is a heme b binding site.

Belongs to the peroxidase family. Peroxidase/catalase subfamily. Homodimer or homotetramer. The cofactor is heme b. In terms of processing, formation of the three residue Trp-Tyr-Met cross-link is important for the catalase, but not the peroxidase activity of the enzyme.

The enzyme catalyses H2O2 + AH2 = A + 2 H2O. The catalysed reaction is 2 H2O2 = O2 + 2 H2O. In terms of biological role, bifunctional enzyme with both catalase and broad-spectrum peroxidase activity. The polypeptide is Catalase-peroxidase 1 (Burkholderia cenocepacia (strain ATCC BAA-245 / DSM 16553 / LMG 16656 / NCTC 13227 / J2315 / CF5610) (Burkholderia cepacia (strain J2315))).